Reading from the N-terminus, the 487-residue chain is 3-octaprenyl-4-hydroxybenzoate carboxy-lyase (487 aa).

Position 172 (Asn172) interacts with Mn(2+). Prenylated FMN contacts are provided by residues 175–177, 189–191, and 194–195; these read IYR, RWL, and RG. Glu238 provides a ligand contact to Mn(2+). Asp287 serves as the catalytic Proton donor.

Belongs to the UbiD family. Homohexamer. The cofactor is prenylated FMN. Requires Mn(2+) as cofactor.

The protein localises to the cell membrane. The enzyme catalyses a 4-hydroxy-3-(all-trans-polyprenyl)benzoate + H(+) = a 2-(all-trans-polyprenyl)phenol + CO2. It participates in cofactor biosynthesis; ubiquinone biosynthesis. Its function is as follows. Catalyzes the decarboxylation of 3-octaprenyl-4-hydroxy benzoate to 2-octaprenylphenol, an intermediate step in ubiquinone biosynthesis. The chain is 3-octaprenyl-4-hydroxybenzoate carboxy-lyase from Nitrosomonas europaea (strain ATCC 19718 / CIP 103999 / KCTC 2705 / NBRC 14298).